We begin with the raw amino-acid sequence, 74 residues long: U3-agatoxin-Ao1h (74 aa).

A signal peptide spans 1 to 20; sequence MRAIISLLLISTMVFGVIEA. Residues 21 to 34 constitute a propeptide that is removed on maturation; sequence VSVQKSLKIFEGER. Disulfide bonds link cysteine 37/cysteine 53, cysteine 44/cysteine 58, cysteine 52/cysteine 68, and cysteine 60/cysteine 66. An Asparagine amide modification is found at asparagine 72.

It belongs to the neurotoxin 07 (Beta/delta-agtx) family. 03 (aga-4) subfamily. Aga sub-subfamily. In terms of tissue distribution, expressed by the venom gland.

The protein resides in the secreted. In terms of biological role, insecticidal neurotoxin that induces an irreversible spastic paralysis when injected into insects. Modifies presynaptic voltage-gated sodium channels (Nav), causing them to open at the normal resting potential of the nerve. This leads to spontaneous release of neurotransmitter and repetitive action potentials in motor neurons. This chain is U3-agatoxin-Ao1h, found in Agelena orientalis (Funnel-web spider).